A 249-amino-acid polypeptide reads, in one-letter code: Olfactory receptor 1571 (249 aa).

Residues 1-9 (LLMCNLCFA) form a helical membrane-spanning segment. Topologically, residues 10–40 (DICFTSASIPTNLVNIQTKNKVITYEGCISQ) are extracellular. A disulfide bond links Cys37 and Cys119. Residues 41–60 (VYFFILFGVLDNFLLAVMAY) traverse the membrane as a helical segment. Topologically, residues 61–82 (DRYVAICHPLHYTVIMNRRLCG) are cytoplasmic. A helical transmembrane segment spans residues 83–103 (LLVLGSWVTTALNSLLQSSMA). At 104-136 (LRLSFCTDLKIPHFVCELNQLVLLACNDTFPND) the chain is on the extracellular side. Asn130 is a glycosylation site (N-linked (GlcNAc...) asparagine). Residues 137 to 158 (MVMYFAAVLLGGGPLAGILYSY) form a helical membrane-spanning segment. Over 159–180 (SKIVSSIRAISSSQGKYKAFST) the chain is Cytoplasmic. Residues 181-200 (CASHLSVVSLFYSTLLGVYL) form a helical membrane-spanning segment. Over 201–210 (SSSFTQNSHS) the chain is Extracellular. The chain crosses the membrane as a helical span at residues 211 to 232 (TARASVMYSVVTPMLNPFIYSL). Residues 233–249 (RNKDLMGALRRLFRRKP) lie on the Cytoplasmic side of the membrane.

It belongs to the G-protein coupled receptor 1 family. In terms of tissue distribution, tongue specific.

It localises to the cell membrane. In terms of biological role, possible taste receptor. This Rattus norvegicus (Rat) protein is Olfactory receptor 1571 (Olr1571).